A 234-amino-acid polypeptide reads, in one-letter code: Large ribosomal subunit protein uL1 (234 aa).

It belongs to the universal ribosomal protein uL1 family. In terms of assembly, part of the 50S ribosomal subunit.

Functionally, binds directly to 23S rRNA. The L1 stalk is quite mobile in the ribosome, and is involved in E site tRNA release. In terms of biological role, protein L1 is also a translational repressor protein, it controls the translation of the L11 operon by binding to its mRNA. In Wolinella succinogenes (strain ATCC 29543 / DSM 1740 / CCUG 13145 / JCM 31913 / LMG 7466 / NCTC 11488 / FDC 602W) (Vibrio succinogenes), this protein is Large ribosomal subunit protein uL1.